Consider the following 127-residue polypeptide: Large ribosomal subunit protein bL12 (127 aa).

2 positions are modified to N6-methyllysine: Lys-77 and Lys-88.

The protein belongs to the bacterial ribosomal protein bL12 family. Homodimer. Part of the ribosomal stalk of the 50S ribosomal subunit. Forms a multimeric L10(L12)X complex, where L10 forms an elongated spine to which 2 to 4 L12 dimers bind in a sequential fashion. Binds GTP-bound translation factors.

Functionally, forms part of the ribosomal stalk which helps the ribosome interact with GTP-bound translation factors. Is thus essential for accurate translation. The polypeptide is Large ribosomal subunit protein bL12 (Nitratidesulfovibrio vulgaris (strain DSM 19637 / Miyazaki F) (Desulfovibrio vulgaris)).